A 306-amino-acid polypeptide reads, in one-letter code: UDP-N-acetylenolpyruvoylglucosamine reductase (306 aa).

In terms of domain architecture, FAD-binding PCMH-type spans 30–216 (RIGGPVPYIL…KSKLIDFSTR (187 aa)). Arginine 180 is a catalytic residue. Residue serine 230 is the Proton donor of the active site. Residue glutamate 301 is part of the active site.

This sequence belongs to the MurB family. FAD serves as cofactor.

The protein resides in the cytoplasm. It catalyses the reaction UDP-N-acetyl-alpha-D-muramate + NADP(+) = UDP-N-acetyl-3-O-(1-carboxyvinyl)-alpha-D-glucosamine + NADPH + H(+). The protein operates within cell wall biogenesis; peptidoglycan biosynthesis. Functionally, cell wall formation. In Petrotoga mobilis (strain DSM 10674 / SJ95), this protein is UDP-N-acetylenolpyruvoylglucosamine reductase.